Reading from the N-terminus, the 276-residue chain is MKLGCHISISKGFPQAVENAHRLGCEAFQFFTKNPRGFKGKSADPEAAARGRALMAEYGLVAVAHAPYITNLSTPDPELQAISIASLKQDLENAEAYGAIGCVCHMGKHVGEGEAYGRARMVETLNRLLEAYTGSCPLLLENTAGMGSELGTHLEELMEVRSRVEQPERIAFCFDTCHAFAAGIYRPEDWEDFVAHARAIGYWGLLRAVHLNDSKFDHGSRKDRHANLGKGFLGEAGIATLLRSGAFEGLPVVLETPVKDEAEYGPEIAYARSLLQ.

His-65, His-105, Glu-141, Asp-175, His-178, His-210, Asp-223, His-225, and Glu-255 together coordinate Zn(2+).

It belongs to the AP endonuclease 2 family. The cofactor is Zn(2+).

The catalysed reaction is Endonucleolytic cleavage to 5'-phosphooligonucleotide end-products.. Its function is as follows. Endonuclease IV plays a role in DNA repair. It cleaves phosphodiester bonds at apurinic or apyrimidinic (AP) sites, generating a 3'-hydroxyl group and a 5'-terminal sugar phosphate. This Symbiobacterium thermophilum (strain DSM 24528 / JCM 14929 / IAM 14863 / T) protein is Probable endonuclease 4.